The following is a 277-amino-acid chain: Large ribosomal subunit protein uL2 (277 aa).

2 disordered regions span residues 28 to 55 and 207 to 277; these read EPEKSLTHHKHSKQGRNNRGVVTSRHRG and KAGR…RTQG. Basic residues-rich tracts occupy residues 34 to 43, 209 to 220, and 255 to 265; these read THHKHSKQGR, GRTRHRGQRPHV, and LGRKTRNKKKR.

The protein belongs to the universal ribosomal protein uL2 family. Part of the 50S ribosomal subunit. Forms a bridge to the 30S subunit in the 70S ribosome.

One of the primary rRNA binding proteins. Required for association of the 30S and 50S subunits to form the 70S ribosome, for tRNA binding and peptide bond formation. It has been suggested to have peptidyltransferase activity; this is somewhat controversial. Makes several contacts with the 16S rRNA in the 70S ribosome. This Microcystis aeruginosa (strain NIES-843 / IAM M-2473) protein is Large ribosomal subunit protein uL2.